The primary structure comprises 103 residues: Small ribosomal subunit protein uS10 (103 aa).

Belongs to the universal ribosomal protein uS10 family. Part of the 30S ribosomal subunit.

Involved in the binding of tRNA to the ribosomes. This is Small ribosomal subunit protein uS10 from Alteromonas mediterranea (strain DSM 17117 / CIP 110805 / LMG 28347 / Deep ecotype).